A 122-amino-acid chain; its full sequence is Large ribosomal subunit protein uL14c (122 aa).

It belongs to the universal ribosomal protein uL14 family. Part of the 50S ribosomal subunit.

It is found in the plastid. The protein localises to the chloroplast. Binds to 23S rRNA. The chain is Large ribosomal subunit protein uL14c from Huperzia lucidula (Shining clubmoss).